Here is a 193-residue protein sequence, read N- to C-terminus: Peptidyl-tRNA hydrolase (193 aa).

Residue Tyr-17 coordinates tRNA. His-22 functions as the Proton acceptor in the catalytic mechanism. TRNA is bound by residues Tyr-68, Asn-70, and Asn-116.

This sequence belongs to the PTH family. Monomer.

Its subcellular location is the cytoplasm. It carries out the reaction an N-acyl-L-alpha-aminoacyl-tRNA + H2O = an N-acyl-L-amino acid + a tRNA + H(+). Hydrolyzes ribosome-free peptidyl-tRNAs (with 1 or more amino acids incorporated), which drop off the ribosome during protein synthesis, or as a result of ribosome stalling. Functionally, catalyzes the release of premature peptidyl moieties from peptidyl-tRNA molecules trapped in stalled 50S ribosomal subunits, and thus maintains levels of free tRNAs and 50S ribosomes. In Acinetobacter baumannii (strain AB0057), this protein is Peptidyl-tRNA hydrolase.